Consider the following 316-residue polypeptide: Taste receptor type 2 member 3 (316 aa).

The Extracellular segment spans residues Met-1–Gly-7. A helical membrane pass occupies residues Val-8–Val-28. At Ser-29–Ser-50 the chain is on the cytoplasmic side. The helical transmembrane segment at Leu-51–Phe-71 threads the bilayer. Residues Ser-72 to Asp-86 lie on the Extracellular side of the membrane. A helical membrane pass occupies residues Val-87–Tyr-107. At Cys-108–Arg-128 the chain is on the cytoplasmic side. Residues Val-129 to Met-149 form a helical membrane-spanning segment. The Extracellular portion of the chain corresponds to Asn-150–Asn-186. N-linked (GlcNAc...) asparagine glycosylation is present at Asn-166. A helical transmembrane segment spans residues Leu-187–Leu-207. The Cytoplasmic segment spans residues Gly-208–Arg-234. Residues Ile-235–Ser-255 form a helical membrane-spanning segment. At Ser-256–Arg-266 the chain is on the extracellular side. Residues Ile-267–Cys-287 traverse the membrane as a helical segment. The Cytoplasmic segment spans residues Asn-288–Ser-316.

This sequence belongs to the G-protein coupled receptor T2R family.

It is found in the membrane. Functionally, gustducin-coupled receptor implicated in the perception of bitter compounds in the oral cavity and the gastrointestinal tract. Signals through PLCB2 and the calcium-regulated cation channel TRPM5. This is Taste receptor type 2 member 3 (Tas2r3) from Mus musculus (Mouse).